Consider the following 452-residue polypeptide: Phosphoglucosamine mutase 2 (452 aa).

The Phosphoserine intermediate role is filled by Ser101. 4 residues coordinate Mg(2+): Ser101, Asp245, Asp247, and Asp249. Ser101 carries the phosphoserine modification.

The protein belongs to the phosphohexose mutase family. Mg(2+) serves as cofactor. In terms of processing, activated by phosphorylation.

The enzyme catalyses alpha-D-glucosamine 1-phosphate = D-glucosamine 6-phosphate. Catalyzes the conversion of glucosamine-6-phosphate to glucosamine-1-phosphate. In Shewanella amazonensis (strain ATCC BAA-1098 / SB2B), this protein is Phosphoglucosamine mutase 2.